A 339-amino-acid polypeptide reads, in one-letter code: Ketol-acid reductoisomerase (NADP(+)) (339 aa).

The 182-residue stretch at 1 to 182 folds into the KARI N-terminal Rossmann domain; the sequence is MRVYYDRDAD…GGGRAGIIET (182 aa). NADP(+) is bound by residues 24 to 27, R48, S51, S53, and 83 to 86; these read YGSQ and DELQ. Residue H108 is part of the active site. G134 provides a ligand contact to NADP(+). Residues 183–328 enclose the KARI C-terminal knotted domain; sequence TFKEECETDL…AKLRDMMPWI (146 aa). Mg(2+) contacts are provided by D191, E195, E227, and E231. A substrate-binding site is contributed by S252.

Belongs to the ketol-acid reductoisomerase family. Mg(2+) serves as cofactor.

The catalysed reaction is (2R)-2,3-dihydroxy-3-methylbutanoate + NADP(+) = (2S)-2-acetolactate + NADPH + H(+). The enzyme catalyses (2R,3R)-2,3-dihydroxy-3-methylpentanoate + NADP(+) = (S)-2-ethyl-2-hydroxy-3-oxobutanoate + NADPH + H(+). Its pathway is amino-acid biosynthesis; L-isoleucine biosynthesis; L-isoleucine from 2-oxobutanoate: step 2/4. It functions in the pathway amino-acid biosynthesis; L-valine biosynthesis; L-valine from pyruvate: step 2/4. In terms of biological role, involved in the biosynthesis of branched-chain amino acids (BCAA). Catalyzes an alkyl-migration followed by a ketol-acid reduction of (S)-2-acetolactate (S2AL) to yield (R)-2,3-dihydroxy-isovalerate. In the isomerase reaction, S2AL is rearranged via a Mg-dependent methyl migration to produce 3-hydroxy-3-methyl-2-ketobutyrate (HMKB). In the reductase reaction, this 2-ketoacid undergoes a metal-dependent reduction by NADPH to yield (R)-2,3-dihydroxy-isovalerate. The polypeptide is Ketol-acid reductoisomerase (NADP(+)) (Bradyrhizobium diazoefficiens (strain JCM 10833 / BCRC 13528 / IAM 13628 / NBRC 14792 / USDA 110)).